Consider the following 423-residue polypeptide: Putative competence-damage inducible protein (423 aa).

Belongs to the CinA family.

The polypeptide is Putative competence-damage inducible protein (Streptococcus equi subsp. equi (strain 4047)).